Here is a 285-residue protein sequence, read N- to C-terminus: Bifunctional protein FolD (285 aa).

NADP(+) is bound by residues glycine 165–serine 167 and isoleucine 232.

It belongs to the tetrahydrofolate dehydrogenase/cyclohydrolase family. As to quaternary structure, homodimer.

It catalyses the reaction (6R)-5,10-methylene-5,6,7,8-tetrahydrofolate + NADP(+) = (6R)-5,10-methenyltetrahydrofolate + NADPH. The catalysed reaction is (6R)-5,10-methenyltetrahydrofolate + H2O = (6R)-10-formyltetrahydrofolate + H(+). Its pathway is one-carbon metabolism; tetrahydrofolate interconversion. Its function is as follows. Catalyzes the oxidation of 5,10-methylenetetrahydrofolate to 5,10-methenyltetrahydrofolate and then the hydrolysis of 5,10-methenyltetrahydrofolate to 10-formyltetrahydrofolate. This chain is Bifunctional protein FolD, found in Sulfurihydrogenibium sp. (strain YO3AOP1).